Here is a 183-residue protein sequence, read N- to C-terminus: Probable RNA 2'-phosphotransferase (183 aa).

The protein belongs to the KptA/TPT1 family.

Removes the 2'-phosphate from RNA via an intermediate in which the phosphate is ADP-ribosylated by NAD followed by a presumed transesterification to release the RNA and generate ADP-ribose 1''-2''-cyclic phosphate (APPR&gt;P). May function as an ADP-ribosylase. The polypeptide is Probable RNA 2'-phosphotransferase (Clostridium perfringens (strain 13 / Type A)).